A 437-amino-acid chain; its full sequence is MEILMKSGDLNKYDLVKNTLVLVLAGGRGSRLHELTDKRAKPALYFGGNRRIIDFALSNCINSGLNRIGVVTQYAAHSLLRHLQTGWSFLPQERGEFVDMLPARQQIDDSTWYRGTADAVYQNMAIIKNHYRPKYILILAGDHIYKQDYSVMLMDHVNSGAKCTIGCIEVPRSEAHEFGVMAVNENLKVKAFVEKPKDPPAMVGKPDVSLTSMGIYVFDADYLYKMLDREVGTPNTSHDFGKDVLPKCLEEGALYAHPFSRSCMGRNTEGEIYWRDVGTLDSFWQSNIDLVSENPQLDIYDQSWPIRGNPVQAYPSKFFYKHSNVHPVDNSLIGGGCVITDASISNSVLFDRIKIDSFSKVDHCVVLPQVKIGKNCVLKNCIIDRECEIPDGMQIGVDMEEDKNRFRISSTGKVILVTPKMLKILEGHEIGEEGHLD.

Alpha-D-glucose 1-phosphate is bound by residues tyrosine 113, glycine 179, 194–195, and serine 212; that span reads EK.

This sequence belongs to the bacterial/plant glucose-1-phosphate adenylyltransferase family. Homotetramer.

The enzyme catalyses alpha-D-glucose 1-phosphate + ATP + H(+) = ADP-alpha-D-glucose + diphosphate. It participates in glycan biosynthesis; glycogen biosynthesis. Its function is as follows. Involved in the biosynthesis of ADP-glucose, a building block required for the elongation reactions to produce glycogen. Catalyzes the reaction between ATP and alpha-D-glucose 1-phosphate (G1P) to produce pyrophosphate and ADP-Glc. The protein is Glucose-1-phosphate adenylyltransferase of Haemophilus influenzae (strain 86-028NP).